Consider the following 236-residue polypeptide: C-&gt;U-editing enzyme APOBEC-1 (236 aa).

The 125-residue stretch at 10–134 (KDYTLRRRIE…RRNRQGLKDL (125 aa)) folds into the CMP/dCMP-type deaminase domain. Histidine 61 contacts Zn(2+). The active-site Proton donor is glutamate 63. The Zn(2+) site is built by cysteine 93 and cysteine 96.

It belongs to the cytidine and deoxycytidylate deaminase family. Homodimer. Interacts with A1CF; form an mRNA editing complex. Interacts with RBM47; form an mRNA editing complex. Found in a complex with CELF2/CUGBP2 and A1CF. Interacts with HNRPAB. Interacts with SYNCRIP. Requires Zn(2+) as cofactor. Expressed exclusively in the intestine.

The protein localises to the cytoplasm. Its subcellular location is the nucleus. It catalyses the reaction a cytidine in mRNA + H2O + H(+) = a uridine in mRNA + NH4(+). It carries out the reaction cytidine(6666) in apoB mRNA + H2O + H(+) = uridine(6666) in apoB mRNA + NH4(+). In terms of biological role, cytidine deaminase catalyzing the cytidine to uridine postranscriptional editing of a variety of mRNAs. Form complexes with cofactors that confer differential editing activity and selectivity. Responsible for the postranscriptional editing of a CAA codon for Gln to a UAA codon for stop in the apolipoprotein B mRNA. Also involved in CGA (Arg) to UGA (Stop) editing in the NF1 mRNA. May also play a role in the epigenetic regulation of gene expression by participating in DNA demethylation. The chain is C-&gt;U-editing enzyme APOBEC-1 from Oryctolagus cuniculus (Rabbit).